The primary structure comprises 310 residues: Apolipoprotein E (310 aa).

The N-terminal stretch at 1–18 is a signal peptide; the sequence is MKALWAVLLATLLTGCLS. Tandem repeats lie at residues 72–93, 94–115, 116–137, 138–159, 160–181, 182–203, 204–225, and 226–247. Positions 72–247 are 8 X 22 AA approximate tandem repeats; it reads VLMEDTMTEV…RLEEMREHME (176 aa). Met135 carries the methionine sulfoxide modification. Residues 150-160 form an LDL and other lipoprotein receptors binding region; it reads HLRKMRKRLMR. The interval 150 to 160 is LDL receptor binding; the sequence is HLRKMRKRLMR. 154-157 serves as a coordination point for heparin; it reads MRKR. The segment at 202–282 is lipid-binding and lipoprotein association; it reads TANLGAGVAQ…GWFEPLVEDM (81 aa). Residue 221-228 participates in heparin binding; the sequence is GDRLRGRL. The interval 258–310 is homooligomerization; that stretch reads QQIRLQAEIFQARLKGWFEPLVEDMQRQLANLVEKIQASTNSVLSTSVPQENQ. The segment at 270 to 282 is specificity for association with VLDL; that stretch reads RLKGWFEPLVEDM.

The protein belongs to the apolipoprotein A1/A4/E family. As to quaternary structure, homotetramer. May interact with ABCA1; functionally associated with ABCA1 in the biogenesis of HDLs. May interact with APP/A4 amyloid-beta peptide; the interaction is extremely stable in vitro but its physiological significance is unclear. May interact with MAPT. May interact with MAP2. In the cerebrospinal fluid, interacts with secreted SORL1. Interacts with PMEL; this allows the loading of PMEL luminal fragment on ILVs to induce fibril nucleation. In terms of processing, APOE exists as multiple glycosylated and sialylated glycoforms within cells and in plasma. The extent of glycosylation and sialylation are tissue and context specific. Post-translationally, glycated in plasma VLDL. Phosphorylated by FAM20C in the extracellular medium.

The protein resides in the secreted. It localises to the extracellular space. It is found in the extracellular matrix. Its subcellular location is the extracellular vesicle. The protein localises to the endosome. The protein resides in the multivesicular body. APOE is an apolipoprotein, a protein associating with lipid particles, that mainly functions in lipoprotein-mediated lipid transport between organs via the plasma and interstitial fluids. APOE is a core component of plasma lipoproteins and is involved in their production, conversion and clearance. Apolipoproteins are amphipathic molecules that interact both with lipids of the lipoprotein particle core and the aqueous environment of the plasma. As such, APOE associates with chylomicrons, chylomicron remnants, very low density lipoproteins (VLDL) and intermediate density lipoproteins (IDL) but shows a preferential binding to high-density lipoproteins (HDL). It also binds a wide range of cellular receptors including the LDL receptor/LDLR, the LDL receptor-related proteins LRP1, LRP2 and LRP8 and the very low-density lipoprotein receptor/VLDLR that mediate the cellular uptake of the APOE-containing lipoprotein particles. Finally, APOE also has a heparin-binding activity and binds heparan-sulfate proteoglycans on the surface of cells, a property that supports the capture and the receptor-mediated uptake of APOE-containing lipoproteins by cells. A main function of APOE is to mediate lipoprotein clearance through the uptake of chylomicrons, VLDLs, and HDLs by hepatocytes. APOE is also involved in the biosynthesis by the liver of VLDLs as well as their uptake by peripheral tissues ensuring the delivery of triglycerides and energy storage in muscle, heart and adipose tissues. By participating in the lipoprotein-mediated distribution of lipids among tissues, APOE plays a critical role in plasma and tissues lipid homeostasis. APOE is also involved in two steps of reverse cholesterol transport, the HDLs-mediated transport of cholesterol from peripheral tissues to the liver, and thereby plays an important role in cholesterol homeostasis. First, it is functionally associated with ABCA1 in the biogenesis of HDLs in tissues. Second, it is enriched in circulating HDLs and mediates their uptake by hepatocytes. APOE also plays an important role in lipid transport in the central nervous system, regulating neuron survival and sprouting. In Grammomys surdaster (African woodland thicket rat), this protein is Apolipoprotein E (Apoe).